Here is a 166-residue protein sequence, read N- to C-terminus: Small ribosomal subunit protein uS4 (166 aa).

In terms of domain architecture, S4 RNA-binding spans 102–164 (RRLQTIVWRK…HPSCLEVEKE (63 aa)).

Belongs to the universal ribosomal protein uS4 family. As to quaternary structure, part of the 30S ribosomal subunit. Contacts protein S5. The interaction surface between S4 and S5 is involved in control of translational fidelity.

One of the primary rRNA binding proteins, it binds directly to 16S rRNA where it nucleates assembly of the body of the 30S subunit. In terms of biological role, with S5 and S12 plays an important role in translational accuracy. This chain is Small ribosomal subunit protein uS4, found in Korarchaeum cryptofilum (strain OPF8).